Here is a 468-residue protein sequence, read N- to C-terminus: Probable citrate synthase, mitochondrial (468 aa).

Catalysis depends on residues His303, His349, and Asp404.

The protein belongs to the citrate synthase family. As to quaternary structure, homodimer.

It localises to the mitochondrion matrix. The enzyme catalyses oxaloacetate + acetyl-CoA + H2O = citrate + CoA + H(+). It functions in the pathway carbohydrate metabolism; tricarboxylic acid cycle; isocitrate from oxaloacetate: step 1/2. This is Probable citrate synthase, mitochondrial (cts-1) from Caenorhabditis briggsae.